The sequence spans 240 residues: Guanine nucleotide exchange factor sopE2 (240 aa).

Residues Leu-78 to Ser-240 form a GEF catalytic domain region.

Belongs to the GEF (guanine exchange factor) SopE family.

Its subcellular location is the secreted. Activator for CDC42 by directly engaging this Rho GTPase and acting as potent guanine nucleotide exchange factor (GEF). This activation results in actin cytoskeleton rearrangements and stimulates membrane ruffling, promoting bacterial entry into non-phagocytic cells. Chaperone InvB is required for secretion, translocation and stabilization of intracellular levels of sopE2. In Salmonella paratyphi A (strain ATCC 9150 / SARB42), this protein is Guanine nucleotide exchange factor sopE2 (sopE2).